Here is a 472-residue protein sequence, read N- to C-terminus: Glutamate--tRNA ligase (472 aa).

Residues 8 to 18 (PSPTGFLHIGS) carry the 'HIGH' region motif. Positions 239 to 243 (KLSKR) match the 'KMSKS' region motif. Lys242 serves as a coordination point for ATP.

It belongs to the class-I aminoacyl-tRNA synthetase family. Glutamate--tRNA ligase type 1 subfamily. As to quaternary structure, monomer.

It localises to the cytoplasm. It catalyses the reaction tRNA(Glu) + L-glutamate + ATP = L-glutamyl-tRNA(Glu) + AMP + diphosphate. Catalyzes the attachment of glutamate to tRNA(Glu) in a two-step reaction: glutamate is first activated by ATP to form Glu-AMP and then transferred to the acceptor end of tRNA(Glu). The chain is Glutamate--tRNA ligase from Solibacter usitatus (strain Ellin6076).